A 576-amino-acid polypeptide reads, in one-letter code: G protein-coupled receptor kinase 6 (576 aa).

The segment at 1–185 (MELENIVANT…LERQPVTKNT (185 aa)) is N-terminal. Residues 53-171 (YHSLCERQPI…LDSIYFNRFL (119 aa)) form the RGS domain. In terms of domain architecture, Protein kinase spans 186-448 (FRQYRVLGKG…AREVKEHPLF (263 aa)). ATP contacts are provided by residues 192–200 (LGKGGFGEV), lysine 215, and 264–270 (TLMNGGD). Catalysis depends on aspartate 311, which acts as the Proton acceptor. Residue 315 to 318 (ENIL) coordinates ATP. In terms of domain architecture, AGC-kinase C-terminal spans 449 to 514 (KKLNFKRLGA…GSVSIPWQNE (66 aa)). The residue at position 484 (serine 484) is a Phosphoserine. The residue at position 485 (threonine 485) is a Phosphothreonine. Residues cysteine 561, cysteine 562, and cysteine 565 are each lipidated (S-palmitoyl cysteine). A phosphoserine mark is found at serine 566 and serine 568.

Belongs to the protein kinase superfamily. AGC Ser/Thr protein kinase family. GPRK subfamily. In terms of assembly, interacts with GIT1. As to expression, expressed in the brain in striatal neurons.

It localises to the membrane. The catalysed reaction is [G-protein-coupled receptor] + ATP = [G-protein-coupled receptor]-phosphate + ADP + H(+). Functionally, specifically phosphorylates the activated forms of G protein-coupled receptors. Such receptor phosphorylation initiates beta-arrestin-mediated receptor desensitization, internalization, and signaling events leading to their desensitization. Seems to be involved in the desensitization of D2-like dopamine receptors in striatum and chemokine receptor CXCR4 which is critical for CXCL12-induced cell chemotaxis. Phosphorylates rhodopsin (RHO) (in vitro) and a non G-protein-coupled receptor, LRP6 during Wnt signaling (in vitro). In Mus musculus (Mouse), this protein is G protein-coupled receptor kinase 6 (Grk6).